Here is a 348-residue protein sequence, read N- to C-terminus: Heat-inducible transcription repressor HrcA (348 aa).

The protein belongs to the HrcA family.

In terms of biological role, negative regulator of class I heat shock genes (grpE-dnaK-dnaJ and groELS operons). Prevents heat-shock induction of these operons. In Thermodesulfovibrio yellowstonii (strain ATCC 51303 / DSM 11347 / YP87), this protein is Heat-inducible transcription repressor HrcA.